The primary structure comprises 150 residues: Large ribosomal subunit protein bL9 (150 aa).

It belongs to the bacterial ribosomal protein bL9 family.

Binds to the 23S rRNA. This Neisseria meningitidis serogroup A / serotype 4A (strain DSM 15465 / Z2491) protein is Large ribosomal subunit protein bL9.